A 67-amino-acid chain; its full sequence is Potassium channel toxin alpha-KTx (67 aa).

The first 25 residues, 1–25 (MKNIAMKTTVVLTILLLSVLTAINA), serve as a signal peptide directing secretion. A propeptide spanning residues 26 to 31 (DTMKKR) is cleaved from the precursor. Intrachain disulfides connect Cys-35–Cys-54, Cys-40–Cys-59, Cys-44–Cys-61, and Cys-49–Cys-64.

It belongs to the short scorpion toxin superfamily. Potassium channel inhibitor family. Expressed by the venom gland.

Its subcellular location is the secreted. Blocks Kv1.1/KCNA1, Kv1.2/KCNA2 and Kv1.3/KCNA3 voltage-gated potassium channels. This chain is Potassium channel toxin alpha-KTx, found in Hoffmannihadrurus gertschi (Scorpion).